Reading from the N-terminus, the 181-residue chain is Iron sulfur cluster assembly protein 1, mitochondrial (181 aa).

The disordered stretch occupies residues 159–181; sequence RKTKNPTLGAEAAETPAAATATA. Residues 168-181 show a composition bias toward low complexity; that stretch reads AEAAETPAAATATA.

It belongs to the NifU family. In terms of assembly, component of the core Fe-S cluster (ISC) assembly machinery. [2Fe-2S] cluster is required as a cofactor.

It localises to the mitochondrion matrix. Its pathway is cofactor biosynthesis; iron-sulfur cluster biosynthesis. In terms of biological role, scaffold protein for the de novo synthesis of iron-sulfur (Fe-S) clusters within mitochondria, which is required for maturation of both mitochondrial and cytoplasmic [2Fe-2S] and [4Fe-4S] proteins. First, a [2Fe-2S] cluster is transiently assembled on the scaffold protein ISU1. In a second step, the cluster is released from ISU1, transferred to a glutaredoxin, followed by the formation of mitochondrial [2Fe-2S] proteins, the synthesis of [4Fe-4S] clusters and their target-specific insertion into the recipient apoproteins. Cluster assembly on ISU1 depends on the function of the cysteine desulfurase complex NFS1-ISD11, which serves as the sulfur donor for cluster synthesis, the iron-binding protein frataxin as the putative iron donor, and the electron transfer chain comprised of ferredoxin reductase and ferredoxin, which receive their electrons from NADH. The polypeptide is Iron sulfur cluster assembly protein 1, mitochondrial (ISU1) (Yarrowia lipolytica (strain CLIB 122 / E 150) (Yeast)).